A 355-amino-acid polypeptide reads, in one-letter code: Protein RecA (355 aa).

65–72 (GPESSGKT) contributes to the ATP binding site. Positions 333–355 (IEEKDEKQAEAEKNENTNLFDEE) are disordered. A compositionally biased stretch (basic and acidic residues) spans 336–347 (KDEKQAEAEKNE).

It belongs to the RecA family.

The protein localises to the cytoplasm. Its function is as follows. Can catalyze the hydrolysis of ATP in the presence of single-stranded DNA, the ATP-dependent uptake of single-stranded DNA by duplex DNA, and the ATP-dependent hybridization of homologous single-stranded DNAs. It interacts with LexA causing its activation and leading to its autocatalytic cleavage. This chain is Protein RecA, found in Staphylococcus carnosus (strain TM300).